The following is a 173-amino-acid chain: ATP-dependent protease subunit HslV (173 aa).

Thr-2 is a catalytic residue. 3 residues coordinate Na(+): Gly-158, Asp-161, and Ser-164.

This sequence belongs to the peptidase T1B family. HslV subfamily. As to quaternary structure, a double ring-shaped homohexamer of HslV is capped on each side by a ring-shaped HslU homohexamer. The assembly of the HslU/HslV complex is dependent on binding of ATP.

The protein resides in the cytoplasm. The catalysed reaction is ATP-dependent cleavage of peptide bonds with broad specificity.. With respect to regulation, allosterically activated by HslU binding. In terms of biological role, protease subunit of a proteasome-like degradation complex believed to be a general protein degrading machinery. This Haemophilus ducreyi (strain 35000HP / ATCC 700724) protein is ATP-dependent protease subunit HslV.